Consider the following 417-residue polypeptide: MLLIPSFTANSNEPPPSKLSLSDLSMAILKSHFFLLFPLLLLHFHTVSFAQTLFVFGDGLYDAGNKQFLSQNRVDASFPPYGVTVGQATGRWSDGSIVPDYLAKFMGIPKISPILLTTADFSHGANFAIADATVLGSPPETMTLSQQVKKFSENKNKWTNQTRSEAIYLIYIGSDDYLSYAKSNPSPSDTQKQAFVDQVITTIKAEIKVVYGSGGRKFAFQNLAPLGCLPAVKQASGNVQECVKLPSEMAALHNKKLLQLLVELSRELNGFQYSFYDFFSSIQNRVIKSKTYTFETGNAACCGTGSINGSNCSAKNVCAKPEEYIFFDGKHLTQEANLQVGHLMWGADPEVIGPNNIRELMVLPLDITVILAGIQEAMAAMRPRQSNIESLYDIKKMESEMDNHWLYQVDKAISFMI.

Positions 1–50 (MLLIPSFTANSNEPPPSKLSLSDLSMAILKSHFFLLFPLLLLHFHTVSFA) are cleaved as a signal peptide. N-linked (GlcNAc...) asparagine glycosylation is found at Asn-160, Asn-308, and Asn-311. The active site involves His-331.

Belongs to the 'GDSL' lipolytic enzyme family. In terms of assembly, interacts with the PYK10 complex and TGG2, but not with TGG1 or PEN2. In terms of tissue distribution, expressed throughout the seedling, rosette leaves, roots, inflorescence and imbibed seed, but not in pollen.

It localises to the vacuole. The protein localises to the endoplasmic reticulum. Its function is as follows. Involved in organization of the endomembrane system and is required for endoplasmic reticulum morphology and organelle distribution. May act by inhibiting the formation of PYK10 complex by binding to GLL23 and exporting it from the ER. Required for proper subcellular localization of myrosinase TGG2. Has no lipase or esterase activity. This chain is Inactive GDSL esterase/lipase-like protein 25 (MVP1), found in Arabidopsis thaliana (Mouse-ear cress).